The following is a 619-amino-acid chain: Keratin, type II cytoskeletal 1 (619 aa).

The head stretch occupies residues 1 to 180 (MSRHFSSRSG…DPEIQKVKTR (180 aa)). Arg-12 carries the omega-N-methylarginine modification. A phosphoserine mark is found at Ser-18 and Ser-21. A disordered region spans residues 28–49 (QRRTTSSSVRHSGGGGGRFSGG). Residues 39–49 (SGGGGGRFSGG) show a composition bias toward gly residues. Arg-45 carries the post-translational modification Omega-N-methylarginine. At Ser-68 the chain carries Phosphoserine. Positions 173–477 (EIQKVKTRER…ELMNTKLALD (305 aa)) form a coiled coil. The coil 1A stretch occupies residues 181–216 (EREQIKSLNNQFASFIDKVRFLEQQNQVLQTKWELL). The IF rod domain occupies 181-494 (EREQIKSLNN…TLLEGEESRM (314 aa)). Residues 217–235 (QQVDTSTRTHSLEPYFENY) form a linker 1 region. Residues 236 to 327 (ISNLRRRVDQ…TLYQAELSQM (92 aa)) are coil 1B. Lys-277 carries the post-translational modification N6,N6-dimethyllysine. Residues 328 to 351 (QTQISETNVILSMDNNRSLDLDSI) form a linker 12 region. Ser-345 bears the Phosphoserine mark. The coil 2 stretch occupies residues 352 to 490 (ISEVKAQYEE…ATYRTLLEGE (139 aa)). The tail stretch occupies residues 491 to 619 (ESRMSGECAP…VSTSYSRAVR (129 aa)). 2 positions are modified to omega-N-methylarginine: Arg-519 and Arg-575. The interval 559 to 619 (GGGGGGYGSS…VSTSYSRAVR (61 aa)) is disordered. Residues 573 to 595 (GHRGGSGGGSRSGGSSGGRGSSS) are compositionally biased toward gly residues. Over residues 596–606 (GGIKTSSGSSS) the composition is skewed to low complexity. The segment covering 607–619 (VKFVSTSYSRAVR) has biased composition (polar residues).

The protein belongs to the intermediate filament family. As to quaternary structure, heterotetramer of two type I and two type II keratins. Heterodimer with KRT10. Two heterodimers of KRT1 and KRT10 form a heterotetramer. Forms a heterodimer with KRT14; the interaction is more abundant in the absence of KRT5. Interacts with ITGB1 in the presence of RACK1 and SRC, and with RACK1. Interacts with C1QBP; the association represents a cell surface kininogen receptor. Interacts with EPPK1; interaction is dependent of higher-order structure of intermediate filament. Undergoes deimination of some arginine residues (citrullination).

It is found in the cell membrane. It localises to the cytoplasm. Functionally, may regulate the activity of kinases such as PKC and SRC via binding to integrin beta-1 (ITB1) and the receptor of activated protein C kinase 1 (RACK1). In complex with C1QBP is a high affinity receptor for kininogen-1/HMWK. This Canis lupus familiaris (Dog) protein is Keratin, type II cytoskeletal 1.